Reading from the N-terminus, the 282-residue chain is HTH-type transcriptional activator RhaR (282 aa).

An HTH araC/xylS-type domain is found at 179-277 (DKLITRLAAS…GMTPSQWRHL (99 aa)). 2 DNA-binding regions (H-T-H motif) span residues 196–217 (DKFC…RQQT) and 244–267 (ISDI…TRET).

As to quaternary structure, binds DNA as a dimer.

The protein resides in the cytoplasm. Activates expression of the rhaSR operon in response to L-rhamnose. The protein is HTH-type transcriptional activator RhaR of Shigella flexneri serotype 5b (strain 8401).